The sequence spans 445 residues: KIN17-like protein (445 aa).

Residues 26-50 (WYCQLCEKQCRDENGFKCHISSESH) form a C2H2-type zinc finger. 2 stretches are compositionally biased toward low complexity: residues 215 to 229 (NTTTTTTNTTTTTTN) and 239 to 253 (NDNNSSNNNYNDQTN). The segment at 215 to 256 (NTTTTTTNTTTTTTNKNIFDKLKTNDNNSSNNNYNDQTNPKP) is disordered.

This sequence belongs to the KIN17 family.

The sequence is that of KIN17-like protein from Dictyostelium discoideum (Social amoeba).